The primary structure comprises 581 residues: Oligo-1,6-glucosidase IMA5 (581 aa).

The Nucleophile role is filled by Asp210. Glu272 (proton donor) is an active-site residue.

This sequence belongs to the glycosyl hydrolase 13 family.

The enzyme catalyses Hydrolysis of (1-&gt;6)-alpha-D-glucosidic linkages in some oligosaccharides produced from starch and glycogen by alpha-amylase, and in isomaltose.. Functionally, alpha-glucosidase with specificity for isomaltose, maltose, and palatinose. This chain is Oligo-1,6-glucosidase IMA5 (IMA5), found in Saccharomyces cerevisiae (strain ATCC 204508 / S288c) (Baker's yeast).